Here is a 276-residue protein sequence, read N- to C-terminus: NADH-cytochrome b5 reductase 2 (276 aa).

Positions 15–127 (EAKYPLPLIE…RGPTGRLFYN (113 aa)) constitute an FAD-binding FR-type domain. At lysine 17 the chain carries N6-acetyllysine. The residue at position 18 (tyrosine 18) is a Phosphotyrosine. FAD-binding positions include 107–137 (ENMK…IKTD) and 146–181 (LVHH…RMSL).

It belongs to the flavoprotein pyridine nucleotide cytochrome reductase family. FAD serves as cofactor.

The catalysed reaction is 2 Fe(III)-[cytochrome b5] + NADH = 2 Fe(II)-[cytochrome b5] + NAD(+) + H(+). NADH-cytochrome b5 reductases are involved in desaturation and elongation of fatty acids, cholesterol biosynthesis, drug metabolism, and, in erythrocyte, methemoglobin reduction. Responsible for NADH-dependent lucigenin chemiluminescence in spermatozoa by reducing both lucigenin and 2-[4-iodophenyl]-3-[4-nitrophenyl]-5-[2,4-disulfophenyl]-2H tetrazolium monosodium salt (WST-1). The sequence is that of NADH-cytochrome b5 reductase 2 (Cyb5r2) from Rattus norvegicus (Rat).